Here is a 424-residue protein sequence, read N- to C-terminus: MFIDTAKIFVKSGKGGDGSISFRREKYIAFGGPDGGDGGKGGNVVLVVDPNMTTLLDFTYKRKYKAEPGGNGAGSKCFGKNGKDLHIKVPMGTIVKDVETDKIMADLSKPEDSYVVAKGGRGGKGNCRFTTPTRQAPDFAEPGMPEEERWIKLELKLLADVGLIGFPNVGKSTLLSVVSKARPKIANYHFTTLKPNLGVVSIEGVNNFVIADIPGIIEGASEGVGLGLDFLRHVERTRVLIHVIDISSVEGRDPYDDFLKINEELKRYSVKLYDRPQIIAANKSDMLFDEEKFEEFKTKVEKHGYNKVFKISAATKQGVDDLMKEAARLLSTIPVTDLEISEEDRFIEEEKRFTYSIRKEDNTYIVEGSFVDRLLNAVNVNDPDDLRYFHKVLKNKGVMEELMEMGIEDGDIVRLNDFEFDFLL.

The Obg domain occupies 1–158 (MFIDTAKIFV…RWIKLELKLL (158 aa)). The OBG-type G domain maps to 159–331 (ADVGLIGFPN…LMKEAARLLS (173 aa)). Residues 165-172 (GFPNVGKS), 190-194 (FTTLK), 212-215 (DIPG), 282-285 (NKSD), and 312-314 (SAA) contribute to the GTP site. S172 and T192 together coordinate Mg(2+). The OCT domain occupies 345–424 (RFIEEEKRFT…LNDFEFDFLL (80 aa)).

Belongs to the TRAFAC class OBG-HflX-like GTPase superfamily. OBG GTPase family. As to quaternary structure, monomer. Requires Mg(2+) as cofactor.

The protein localises to the cytoplasm. Its function is as follows. An essential GTPase which binds GTP, GDP and possibly (p)ppGpp with moderate affinity, with high nucleotide exchange rates and a fairly low GTP hydrolysis rate. Plays a role in control of the cell cycle, stress response, ribosome biogenesis and in those bacteria that undergo differentiation, in morphogenesis control. The chain is GTPase Obg from Clostridium botulinum (strain Okra / Type B1).